We begin with the raw amino-acid sequence, 201 residues long: Small ribosomal subunit protein uS4c (201 aa).

Residues 17-44 (ALPGLTNKKPRTGSDLRNQSRSGKKSQY) are disordered. The 61-residue stretch at 89–149 (MRLDNILFRL…DEQKSRALIQ (61 aa)) folds into the S4 RNA-binding domain.

It belongs to the universal ribosomal protein uS4 family. In terms of assembly, part of the 30S ribosomal subunit. Contacts protein S5. The interaction surface between S4 and S5 is involved in control of translational fidelity.

The protein resides in the plastid. The protein localises to the chloroplast. In terms of biological role, one of the primary rRNA binding proteins, it binds directly to 16S rRNA where it nucleates assembly of the body of the 30S subunit. Functionally, with S5 and S12 plays an important role in translational accuracy. This Solanum bulbocastanum (Wild potato) protein is Small ribosomal subunit protein uS4c (rps4).